We begin with the raw amino-acid sequence, 252 residues long: Major prion protein (252 aa).

The first 22 residues, 1–22 (MANLGCWMLVLFVATWSDLGLC), serve as a signal peptide directing secretion. An interaction with ADGRG6 region spans residues 23-38 (KKRPKPGGWNTGGSRY). Residues 23 to 229 (KKRPKPGGWN…ESQAYYQRGS (207 aa)) are interaction with GRB2, ERI3 and SYN1. The interval 26–106 (PKPGGWNTGG…QWNKPSKPKT (81 aa)) is disordered. 5 repeat units span residues 51–58 (PQGGGWGQ), 59–66 (PHGGGWGQ), 67–74 (PHGGGWGQ), 75–82 (PHGGSWGQ), and 83–90 (PHGGGWGQ). The 5 X 8 AA tandem repeats of P-H-G-G-G-W-G-Q stretch occupies residues 51–90 (PQGGGWGQPHGGGWGQPHGGGWGQPHGGSWGQPHGGGWGQ). The span at 52–94 (QGGGWGQPHGGGWGQPHGGGWGQPHGGSWGQPHGGGWGQGGGT) shows a compositional bias: gly residues. Cu(2+) contacts are provided by histidine 60, glycine 61, glycine 62, histidine 68, glycine 69, glycine 70, histidine 76, glycine 77, glycine 78, histidine 84, glycine 85, and glycine 86. A disulfide bond links cysteine 178 and cysteine 213. Residues asparagine 180 and asparagine 196 are each glycosylated (N-linked (GlcNAc...) asparagine). A lipid anchor (GPI-anchor amidated serine) is attached at serine 229. Residues 230-252 (SMVLFSSPPVILLISFLIFLIVG) constitute a propeptide, removed in mature form.

Belongs to the prion family. In terms of assembly, monomer and homodimer. Has a tendency to aggregate into amyloid fibrils containing a cross-beta spine, formed by a steric zipper of superposed beta-strands. Soluble oligomers may represent an intermediate stage on the path to fibril formation. Copper binding may promote oligomerization. Interacts with GRB2, APP, ERI3/PRNPIP and SYN1. Mislocalized cytosolically exposed PrP interacts with MGRN1; this interaction alters MGRN1 subcellular location and causes lysosomal enlargement. Interacts with APP. Interacts with KIAA1191. Interacts with ADGRG6.

It localises to the cell membrane. It is found in the golgi apparatus. In terms of biological role, its primary physiological function is unclear. May play a role in neuronal development and synaptic plasticity. May be required for neuronal myelin sheath maintenance. May promote myelin homeostasis through acting as an agonist for ADGRG6 receptor. May play a role in iron uptake and iron homeostasis. Soluble oligomers are toxic to cultured neuroblastoma cells and induce apoptosis (in vitro). Association with GPC1 (via its heparan sulfate chains) targets PRNP to lipid rafts. Also provides Cu(2+) or Zn(2+) for the ascorbate-mediated GPC1 deaminase degradation of its heparan sulfate side chains. The protein is Major prion protein (PRNP) of Sapajus apella (Brown-capped capuchin).